A 1447-amino-acid polypeptide reads, in one-letter code: DNA-directed RNA polymerase subunit beta' (1447 aa).

Cys-70, Cys-72, Cys-85, and Cys-88 together coordinate Zn(2+). The Mg(2+) site is built by Asp-460, Asp-462, and Asp-464. Zn(2+)-binding residues include Cys-890, Cys-964, Cys-971, and Cys-974.

The protein belongs to the RNA polymerase beta' chain family. The RNAP catalytic core consists of 2 alpha, 1 beta, 1 beta' and 1 omega subunit. When a sigma factor is associated with the core the holoenzyme is formed, which can initiate transcription. The cofactor is Mg(2+). It depends on Zn(2+) as a cofactor.

It carries out the reaction RNA(n) + a ribonucleoside 5'-triphosphate = RNA(n+1) + diphosphate. In terms of biological role, DNA-dependent RNA polymerase catalyzes the transcription of DNA into RNA using the four ribonucleoside triphosphates as substrates. This is DNA-directed RNA polymerase subunit beta' from Desulfosudis oleivorans (strain DSM 6200 / JCM 39069 / Hxd3) (Desulfococcus oleovorans).